The primary structure comprises 128 residues: Insulin-like growth factor 2 (128 aa).

Residues Met1–Ala24 form the signal peptide. Positions Ala25–Phe52 are b. Disulfide bonds link Cys33/Cys71, Cys45/Cys84, and Cys70/Cys75. Residues Ser53 to Arg64 are c. The a stretch occupies residues Gly65–Ala85. The d stretch occupies residues Thr86–Glu91. The propeptide at Arg92–Arg128 is e peptide.

It belongs to the insulin family. Interacts with MYORG; this interaction is required for IGF2 secretion. Interacts with integrins ITGAV:ITGB3 and ITGA6:ITGB4; integrin-binding is required for IGF2 signaling. In terms of processing, proteolytically processed by PCSK4, proIGF2 is cleaved at Arg-128 and Arg-92 to generate big-IGF2 and mature IGF2.

The protein localises to the secreted. In terms of biological role, the insulin-like growth factors possess growth-promoting activity. Major fetal growth hormone in mammals. Plays a key role in regulating fetoplacental development. IGF2 is influenced by placental lactogen. Also involved in tissue differentiation. In adults, involved in glucose metabolism in adipose tissue, skeletal muscle and liver. Acts as a ligand for integrin which is required for IGF2 signaling. Positively regulates myogenic transcription factor MYOD1 function by facilitating the recruitment of transcriptional coactivators, thereby controlling muscle terminal differentiation. Inhibits myoblast differentiation and metabolism via increasing the mitochondrial respiration rate. Functionally, preptin undergoes glucose-mediated co-secretion with insulin, and acts as a physiological amplifier of glucose-mediated insulin secretion. Exhibits osteogenic properties by increasing osteoblast mitogenic activity through phosphoactivation of MAPK1 and MAPK3. The polypeptide is Insulin-like growth factor 2 (Cavia porcellus (Guinea pig)).